The chain runs to 434 residues: Tubulin gamma chain (434 aa).

135–141 (AGGTGSG) contacts GTP.

This sequence belongs to the tubulin family.

Its subcellular location is the cytoplasm. It is found in the cytoskeleton. The protein resides in the microtubule organizing center. The protein localises to the spindle pole body. Its function is as follows. Tubulin is the major constituent of microtubules. The gamma chain is found at microtubule organizing centers (MTOC) such as the spindle poles or the centrosome, suggesting that it is involved in the minus-end nucleation of microtubule assembly. This chain is Tubulin gamma chain (TUB4), found in Encephalitozoon cuniculi (strain GB-M1) (Microsporidian parasite).